A 416-amino-acid chain; its full sequence is CapZ-interacting protein (416 aa).

2 disordered regions span residues 1-84 (MEER…KSSP) and 98-416 (AALL…DTKM). A compositionally biased stretch (polar residues) spans 8–20 (TNANVDNSASPSV). Residue Ser17 is modified to Phosphoserine. Phosphoserine; by MAPK8; in vitro is present on Ser68. Phosphoserine is present on Ser82. Phosphoserine; by MAPK8; in vitro is present on Ser83. Phosphoserine is present on Ser105. Ser108 is modified (phosphoserine; by MAPK12 and MAPK13). Phosphoserine occurs at positions 116, 120, and 123. Thr124 is subject to Phosphothreonine. Phosphoserine occurs at positions 126, 127, 135, and 143. Positions 159 to 176 (VRTRGSIKRRPPSRRFRR) are enriched in basic residues. Residue Ser177 is modified to Phosphoserine. Ser179 carries the phosphoserine; by MAPKAPK2 and MAPKAPK3 modification. At Ser216 the chain carries Phosphoserine; by MAPK8; in vitro. The 104-residue stretch at 227 to 330 (GVRTLGPAEK…RVQNEEVGPE (104 aa)) folds into the RCSD domain. Ser244 carries the phosphoserine; by MAPKAPK2 or MAPKAPK3; in vitro modification. The span at 244-273 (SRTEKQEEDRATEEAKNGEKARRSSEEVDG) shows a compositional bias: basic and acidic residues. A phosphoserine mark is found at Ser267, Ser268, Ser284, Ser298, and Ser333. Over residues 292-349 (AENRCGSPREEKPAGEEAEMEKATEVKGERVQNEEVGPEHDSQETKKLEEGAAVKETP) the composition is skewed to basic and acidic residues. Thr336 carries the post-translational modification Phosphothreonine. Position 351 is a phosphoserine (Ser351). Residues 360–372 (DVPKQEKGKEKQQ) are compositionally biased toward basic and acidic residues. Polar residues predominate over residues 382-397 (SPQTGPAQLETSSEVQ).

As to quaternary structure, interacts with CAPZA2 and CAPZB. In terms of processing, dephosphorylation results in its dissociation from CAPZA2. In terms of tissue distribution, highly expressed in skeletal muscle and more weakly in cardiac muscle. Also expressed in several lymphoid organs, including spleen, thymus, peripheral blood leukocytes, lymph node and bone marrow.

Its function is as follows. Stress-induced phosphorylation of CAPZIP may regulate the ability of F-actin-capping protein to remodel actin filament assembly. This is CapZ-interacting protein (RCSD1) from Homo sapiens (Human).